Reading from the N-terminus, the 121-residue chain is Large ribosomal subunit protein uL14c (121 aa).

The protein belongs to the universal ribosomal protein uL14 family. As to quaternary structure, part of the 50S ribosomal subunit.

It is found in the plastid. The protein localises to the chloroplast. Binds to 23S rRNA. In Oedogonium cardiacum (Filamentous green alga), this protein is Large ribosomal subunit protein uL14c.